We begin with the raw amino-acid sequence, 306 residues long: Aspartate carbamoyltransferase catalytic subunit (306 aa).

Residues Arg55 and Thr56 each coordinate carbamoyl phosphate. Position 84 (Lys84) interacts with L-aspartate. 3 residues coordinate carbamoyl phosphate: Arg105, His133, and Gln136. L-aspartate contacts are provided by Arg166 and Arg227. Carbamoyl phosphate contacts are provided by Leu265 and Pro266.

Belongs to the aspartate/ornithine carbamoyltransferase superfamily. ATCase family. Heterododecamer (2C3:3R2) of six catalytic PyrB chains organized as two trimers (C3), and six regulatory PyrI chains organized as three dimers (R2).

The enzyme catalyses carbamoyl phosphate + L-aspartate = N-carbamoyl-L-aspartate + phosphate + H(+). It participates in pyrimidine metabolism; UMP biosynthesis via de novo pathway; (S)-dihydroorotate from bicarbonate: step 2/3. Its function is as follows. Catalyzes the condensation of carbamoyl phosphate and aspartate to form carbamoyl aspartate and inorganic phosphate, the committed step in the de novo pyrimidine nucleotide biosynthesis pathway. The sequence is that of Aspartate carbamoyltransferase catalytic subunit from Neisseria meningitidis serogroup C (strain 053442).